A 141-amino-acid polypeptide reads, in one-letter code: Hemoglobin subunit alpha-1 (141 aa).

Residues 1-141 enclose the Globin domain; that stretch reads VLSAADKGNV…VSTVLTSKYR (141 aa). His58 is a binding site for O2. Residue His87 coordinates heme b.

It belongs to the globin family. Heterotetramer of two alpha chains and two beta chains. Red blood cells.

Its function is as follows. Involved in oxygen transport from the lung to the various peripheral tissues. This chain is Hemoglobin subunit alpha-1, found in Bos mutus grunniens (Wild yak).